Here is a 558-residue protein sequence, read N- to C-terminus: Urease subunit alpha 2 (558 aa).

One can recognise a Urease domain in the interval 129-558; the sequence is GAVDTHVHLL…SVSLNRLYFL (430 aa). Ni(2+) contacts are provided by His-134, His-136, and Lys-214. Lys-214 is modified (N6-carboxylysine). Residue His-216 participates in substrate binding. The Ni(2+) site is built by His-243 and His-269. His-317 acts as the Proton donor in catalysis. Asp-357 is a Ni(2+) binding site.

This sequence belongs to the metallo-dependent hydrolases superfamily. Urease alpha subunit family. May form a heterohexamer of 3 UreC (alpha) and 3 UreAB (gamma/beta) subunits. May also form a heterotrimer of UreA (gamma), UreB (beta) and UreC (alpha) subunits. Three heterotrimers associate to form the active enzyme. Ni cation serves as cofactor. Post-translationally, carboxylation allows a single lysine to coordinate two nickel ions.

It localises to the cytoplasm. The enzyme catalyses urea + 2 H2O + H(+) = hydrogencarbonate + 2 NH4(+). Its pathway is nitrogen metabolism; urea degradation; CO(2) and NH(3) from urea (urease route): step 1/1. This is Urease subunit alpha 2 from Streptomyces coelicolor (strain ATCC BAA-471 / A3(2) / M145).